The primary structure comprises 237 residues: Uridylate kinase (237 aa).

Residue 11–14 (KLSG) participates in ATP binding. Gly53 contributes to the UMP binding site. ATP is bound by residues Gly54 and Arg58. UMP contacts are provided by residues Asp73 and 134–141 (TGNPFFTT). The ATP site is built by Thr161, Tyr167, and Asp170.

It belongs to the UMP kinase family. As to quaternary structure, homohexamer.

Its subcellular location is the cytoplasm. The catalysed reaction is UMP + ATP = UDP + ADP. Its pathway is pyrimidine metabolism; CTP biosynthesis via de novo pathway; UDP from UMP (UMPK route): step 1/1. Its activity is regulated as follows. Inhibited by UTP. Its function is as follows. Catalyzes the reversible phosphorylation of UMP to UDP. The protein is Uridylate kinase of Burkholderia lata (strain ATCC 17760 / DSM 23089 / LMG 22485 / NCIMB 9086 / R18194 / 383).